A 367-amino-acid chain; its full sequence is MGESSALQSILYGRGALRLLDQRKLPLEEVYVDVKDSADGWNAIRDMVVRGAPAIAIAAALSLAVEVNDHNFIGTPAEAASFVSKKLEYLVSSRPTAVNLSDAATKLQNLVSTTAETAKDAKSIFQVFIEAAETMLVDDVADNKAIGLHGAEFLQRQLGSSKNISVLTHCNTGSLATAGYGTALGVIRALHSGGVLEKAFCTETRPFNQGSRLTAFELVHDKIPATLIADSAAAALMNNGQVQAVIVGADRIAANGDTANKIGTYNLSIAAKHHGVQFYVAAPVTSIDLSLPSGKQIVIEERSPKELLNSEGGLGKQVAASGISVWNPAFDVTPADLITAIITEKGVITKSDPDGTFDIKSFIECAK.

Catalysis depends on Asp-250, which acts as the Proton donor.

The protein belongs to the eIF-2B alpha/beta/delta subunits family. MtnA subfamily.

Its subcellular location is the cytoplasm. The protein resides in the nucleus. It carries out the reaction 5-(methylsulfanyl)-alpha-D-ribose 1-phosphate = 5-(methylsulfanyl)-D-ribulose 1-phosphate. It participates in amino-acid biosynthesis; L-methionine biosynthesis via salvage pathway; L-methionine from S-methyl-5-thio-alpha-D-ribose 1-phosphate: step 1/6. In terms of biological role, catalyzes the interconversion of methylthioribose-1-phosphate (MTR-1-P) into methylthioribulose-1-phosphate (MTRu-1-P). This Hordeum vulgare (Barley) protein is Methylthioribose-1-phosphate isomerase (IDI2).